The primary structure comprises 508 residues: Protein adenylyltransferase fic-1 (508 aa).

A helical transmembrane segment spans residues 44–64; the sequence is TVIIISVLVSLICQHFVPYAV. TPR repeat units follow at residues 147–180 and 181–214; these read AILA…APTN and PQIL…DPGN. Residues 270 to 275 carry the Inhibitory (S/T)XXXE(G/N) motif motif; it reads TVAIEG. Glutamate 274 lines the ATP pocket. The Fido domain maps to 326–461; that stretch reads ISIDDILEMH…LRPFVRYVAK (136 aa). Residue threonine 352 is modified to O-AMP-threonine; by autocatalysis. 357-360 lines the ATP pocket; that stretch reads VGRF. Histidine 404 is a catalytic residue. ATP is bound by residues 408–415, 440–441, and asparagine 448; these read DGNGRTAR and YY. An O-AMP-threonine; by autocatalysis modification is found at threonine 476. Residues 482-508 form a disordered region; the sequence is LNSGDSKLTPEESEVSEKIEAECRAGN. Basic and acidic residues predominate over residues 496-508; it reads VSEKIEAECRAGN.

This sequence belongs to the fic family. As to quaternary structure, forms homodimers; homodimerization might be required for adenylyltransferase activity. In terms of tissue distribution, ubiquitously expressed, with high expression in the germline.

It is found in the endoplasmic reticulum membrane. Its subcellular location is the nucleus membrane. It catalyses the reaction L-tyrosyl-[protein] + ATP = O-(5'-adenylyl)-L-tyrosyl-[protein] + diphosphate. The catalysed reaction is L-threonyl-[protein] + ATP = 3-O-(5'-adenylyl)-L-threonyl-[protein] + diphosphate. The enzyme catalyses 3-O-(5'-adenylyl)-L-threonyl-[protein] + H2O = L-threonyl-[protein] + AMP + H(+). With respect to regulation, the side chain of Glu-274 determines which of the two opposing activities (AMPylase or de-AMPylase) will take place. In response to endoplasmic reticulum stress, mediates de-AMPylase activity. Adenylyltransferase activity is inhibited by the inhibitory helix present at the N-terminus: Glu-274 binds ATP and competes with ATP-binding at Arg-415, thereby preventing adenylyltransferase activity. In unstressed cells, disengagement of Glu-274 promotes adenylyltransferase activity. Activation dissociates ATP-binding from Glu-274, allowing ordered binding of the entire ATP moiety with the alpha-phosphate in an orientation that is productive for accepting an incoming target hydroxyl side chain. Functionally, protein that can both mediate the addition of adenosine 5'-monophosphate (AMP) to specific residues of target proteins (AMPylation), and the removal of the same modification from target proteins (de-AMPylation), depending on the context. The side chain of Glu-274 determines which of the two opposing activities (AMPylase or de-AMPylase) will take place. Adenylyltransferase that mediates the addition of adenosine 5'-monophosphate (AMP) to specific residues of target proteins. In vivo target proteins include the heat-shock 70 family proteins hsp-1 and hsp-3 and the translation elongation factors eef-1A, eef-1G and eef-2. Can AMPylate core histone H3 in vitro. Can also act as a phosphodiesterase by mediating removal of ATP (de-AMPylation) from target proteins. Decreases susceptibility to P.aeruginosa-mediated killing and might therefore play a role in the innate immune response. In Caenorhabditis elegans, this protein is Protein adenylyltransferase fic-1.